Here is a 383-residue protein sequence, read N- to C-terminus: Acetylornithine deacetylase (383 aa).

Residue His80 participates in Zn(2+) binding. The active site involves Asp82. Asp112 provides a ligand contact to Zn(2+). Glu144 is an active-site residue. Zn(2+) is bound by residues Glu145, Glu169, and His355.

It belongs to the peptidase M20A family. ArgE subfamily. In terms of assembly, homodimer. Requires Zn(2+) as cofactor. It depends on Co(2+) as a cofactor. The cofactor is glutathione.

It localises to the cytoplasm. It catalyses the reaction N(2)-acetyl-L-ornithine + H2O = L-ornithine + acetate. It functions in the pathway amino-acid biosynthesis; L-arginine biosynthesis; L-ornithine from N(2)-acetyl-L-ornithine (linear): step 1/1. Its function is as follows. Catalyzes the hydrolysis of the amide bond of N(2)-acetylated L-amino acids. Cleaves the acetyl group from N-acetyl-L-ornithine to form L-ornithine, an intermediate in L-arginine biosynthesis pathway, and a branchpoint in the synthesis of polyamines. This Escherichia coli O127:H6 (strain E2348/69 / EPEC) protein is Acetylornithine deacetylase.